Here is a 319-residue protein sequence, read N- to C-terminus: Acetyl-coenzyme A carboxylase carboxyl transferase subunit alpha (319 aa).

Positions 32 to 293 (NVETEVRALR…KAVLLNELDA (262 aa)) constitute a CoA carboxyltransferase C-terminal domain.

It belongs to the AccA family. As to quaternary structure, acetyl-CoA carboxylase is a heterohexamer composed of biotin carboxyl carrier protein (AccB), biotin carboxylase (AccC) and two subunits each of ACCase subunit alpha (AccA) and ACCase subunit beta (AccD).

It localises to the cytoplasm. It carries out the reaction N(6)-carboxybiotinyl-L-lysyl-[protein] + acetyl-CoA = N(6)-biotinyl-L-lysyl-[protein] + malonyl-CoA. Its pathway is lipid metabolism; malonyl-CoA biosynthesis; malonyl-CoA from acetyl-CoA: step 1/1. Component of the acetyl coenzyme A carboxylase (ACC) complex. First, biotin carboxylase catalyzes the carboxylation of biotin on its carrier protein (BCCP) and then the CO(2) group is transferred by the carboxyltransferase to acetyl-CoA to form malonyl-CoA. The protein is Acetyl-coenzyme A carboxylase carboxyl transferase subunit alpha of Xanthomonas oryzae pv. oryzae (strain MAFF 311018).